Reading from the N-terminus, the 110-residue chain is Large ribosomal subunit protein uL24 (110 aa).

It belongs to the universal ribosomal protein uL24 family. As to quaternary structure, part of the 50S ribosomal subunit.

In terms of biological role, one of two assembly initiator proteins, it binds directly to the 5'-end of the 23S rRNA, where it nucleates assembly of the 50S subunit. Its function is as follows. One of the proteins that surrounds the polypeptide exit tunnel on the outside of the subunit. The protein is Large ribosomal subunit protein uL24 of Thermus thermophilus (strain ATCC BAA-163 / DSM 7039 / HB27).